The primary structure comprises 214 residues: Adenylate kinase (214 aa).

10-15 is a binding site for ATP; that stretch reads GAGKGT. The NMP stretch occupies residues 30 to 59; that stretch reads STGDMFRDHKARGTEIGKQVQAIMDAGGLV. AMP is bound by residues Thr31, Arg36, 57 to 59, 85 to 88, and Gln92; these read GLV and GYPR. Positions 126-163 are LID; the sequence is GRRSCPRCGAVYHVSQNPPHRAGFCDRDDTALVQREDD. Arg127 lines the ATP pocket. Cys130 and Cys133 together coordinate Zn(2+). 136-137 is an ATP binding site; sequence VY. 2 residues coordinate Zn(2+): Cys150 and Asp153. The AMP site is built by Arg160 and Arg171. Gly199 provides a ligand contact to ATP.

It belongs to the adenylate kinase family. In terms of assembly, monomer.

The protein localises to the cytoplasm. The enzyme catalyses AMP + ATP = 2 ADP. Its pathway is purine metabolism; AMP biosynthesis via salvage pathway; AMP from ADP: step 1/1. Functionally, catalyzes the reversible transfer of the terminal phosphate group between ATP and AMP. Plays an important role in cellular energy homeostasis and in adenine nucleotide metabolism. This Anaeromyxobacter sp. (strain K) protein is Adenylate kinase.